Here is a 215-residue protein sequence, read N- to C-terminus: MLQVFLVRHGETVWNASRQIQGQSDSPLTAVGERQAHLVAQRVRSQGITHIITSDLGRTQQTAKIIADACGLKVVTDPRLRELNMGVLETRPIESLTPEEEQWRKQMINGTEGGRIPEGESMAELGRRMRAALDSCLELPAGSKPLLVSHGMALGCLLSTLLGLPPHAERRLRLRNCSLSRVDYQESPWLASGWVIESAGDTAHLDMPALDELQR.

Substrate is bound by residues 8-15 (RHGETVWN), 21-22 (QG), R58, 82-85 (ELNM), and 151-152 (GM). H9 serves as the catalytic Tele-phosphohistidine intermediate. The active-site Proton donor/acceptor is the E82.

The protein belongs to the phosphoglycerate mutase family. GpmB subfamily.

It carries out the reaction (2R)-2-phosphoglycerate = (2R)-3-phosphoglycerate. It functions in the pathway carbohydrate degradation; glycolysis; pyruvate from D-glyceraldehyde 3-phosphate: step 3/5. The chain is Probable phosphoglycerate mutase GpmB from Yersinia enterocolitica serotype O:8 / biotype 1B (strain NCTC 13174 / 8081).